We begin with the raw amino-acid sequence, 319 residues long: Polyprenyl transferase macG (319 aa).

9 helical membrane passes run 28-45 (AWLCWYPAIWGACVAAGM), 48-68 (VSLELAPFLRLLFGIWASVTA), 106-126 (AVVAFICWLPVTLAITWGTLG), 127-147 (PAVMAGFIPVWVLSTIYPFMK), 152-172 (FPQVVLGAIIGGAVFPGWVGI), 182-202 (ALPLFFATASWVVYFDVFYAT), 224-244 (VQILLAVLGALQVLLFAVTAL), 249-269 (SLIFWVLGLGVWMVNVPWHIL), and 289-309 (LGLYLTGVSLLELFVVRVYDI).

Belongs to the UbiA prenyltransferase family. The cofactor is Mg(2+).

The protein localises to the membrane. Its pathway is secondary metabolite biosynthesis; terpenoid biosynthesis. Its function is as follows. Polyprenyl transferase; part of the gene cluster that mediates the biosynthesis of macrophorins, isoprenoid epoxycyclohexenones containing cyclized drimane moieties. The first step of the pathway is the synthesis of 6-methylsalicylic acid (6-MSA) by the polyketide synthase macA. 6-MSA is then converted to m-cresol by the decarboxylase macB. The cytochrome P450 monooxygenase macC then catalyzes the oxidation of m-cresol to toluquinol. Epoxidation of toluquinol is then performed by the short chain dehydrogenase macD, with the help of macE, and a further prenylation by macG leads to 7-deacetoxyyanuthone A. The next step is the hydroxylation of C-22 of 7-deacetoxyyanuthone A by the cytochrome P450 monooxygenase macH to yield 22-deacetylyanuthone A. O-Mevalon transferase macI then attaches mevalon to the hydroxyl group of 22-deacetylyanuthone A to produce yanuthone E. The terpene cyclase macJ catalyzes the cyclization of 22-deacetylyanuthone A to macrophorin A. MacJ is also able to catalyze cyclization of yanuthone E and 7-deacetoxyyanuthone A to their corresponding macrophorins. The macJ products can be further modified by macH and macJ, as well as by the FAD-dependent monooxygenase macF, to produce additional macrophorins, including 4'-oxomacrophorin A, 4'-oxomacrophorin D and 4'-oxomacrophorin E. The polypeptide is Polyprenyl transferase macG (Penicillium terrestre).